Consider the following 511-residue polypeptide: Protein phosphatase 2C 16 (511 aa).

The first 22 residues, 1 to 22 (MEEMTPAVAMTLSLAANTMCES), serve as a signal peptide directing secretion. The 313-residue stretch at 189–501 (LWGTVSIQGN…DNISIIVIDL (313 aa)) folds into the PPM-type phosphatase domain. Residues aspartate 243, glycine 244, aspartate 432, and aspartate 492 each coordinate Mn(2+).

This sequence belongs to the PP2C family. As to quaternary structure, interacts with SWI3B (via N-terminus). Interacts with ABA-bounded PYR1, PYL1, PYL2, PYL3, PYL4, PYL5, PYL6, PYL8 and PYL9, and with free PYL2, PYL3, PYL4, PYL10 and PYL13. The cofactor is Mg(2+). Mn(2+) is required as a cofactor. Expressed in seeds, roots, stems, leaves and flowers, especially in meristematic tissues, guard cells, embryo and siliques.

It is found in the cytoplasm. Its subcellular location is the nucleus. The enzyme catalyses O-phospho-L-seryl-[protein] + H2O = L-seryl-[protein] + phosphate. It catalyses the reaction O-phospho-L-threonyl-[protein] + H2O = L-threonyl-[protein] + phosphate. With respect to regulation, repressed by PYR/PYL/RCAR ABA receptors in an ABA-dependent manner. Its function is as follows. Key component and repressor of the abscisic acid (ABA) signaling pathway that regulates numerous ABA responses, such as stomatal closure, seed germination and inhibition of vegetative growth. Confers enhanced sensitivity to drought. In Arabidopsis thaliana (Mouse-ear cress), this protein is Protein phosphatase 2C 16 (HAB1).